The primary structure comprises 491 residues: Glucose-6-phosphate exchanger SLC37A2 (491 aa).

A helical membrane pass occupies residues 5-25 (LAPGIWYRAFILLITFLIYTC). Residues N43, N52, and N58 are each glycosylated (N-linked (GlcNAc...) asparagine). The next 5 membrane-spanning stretches (helical) occupy residues 78-98 (GAVD…SGIF), 108-130 (LTAG…FWNI), 132-154 (VLWY…WPAV), 169-189 (LIMG…SLLA), and 200-220 (SFVV…FFLI). The disordered stretch occupies residues 229-257 (SPPQHHGNPEESQDQPEDPANGPSCNKES). Helical transmembrane passes span 292–312 (LCLL…PLYI), 328–348 (TLFD…SDYI), 352–372 (ATTC…YNHV), 377–397 (IGIS…PYAL), 424–444 (AIID…AGLI), and 452–472 (VFYM…RLVY).

Belongs to the major facilitator superfamily. Organophosphate:Pi antiporter (OPA) (TC 2.A.1.4) family.

Its subcellular location is the endoplasmic reticulum membrane. It carries out the reaction D-glucose 6-phosphate(in) + phosphate(out) = D-glucose 6-phosphate(out) + phosphate(in). Inhibited by vanadate but not by chlorogenic acid. Its function is as follows. Inorganic phosphate and glucose-6-phosphate antiporter. May transport cytoplasmic glucose-6-phosphate into the lumen of the endoplasmic reticulum and translocate inorganic phosphate into the opposite direction. Independent of a lumenal glucose-6-phosphatase. May not play a role in homeostatic regulation of blood glucose levels. This chain is Glucose-6-phosphate exchanger SLC37A2, found in Bos taurus (Bovine).